A 1642-amino-acid polypeptide reads, in one-letter code: Coiled-coil domain-containing protein 7A (1642 aa).

The interval 21–51 (PYKKGLLNSSPKPKEKHNAKSKYGKNESMVL) is disordered. The LRR 1 repeat unit spans residues 161–184 (VNQMEEISKDQSNLEELQSDGKTA). The stretch at 279–330 (LEKALNDQQTIESKYKQLETDFQMLIMEKTLLEAEIRRLREIERVKSAAKEE) forms a coiled coil. Residues 1310–1333 (IKELSKTLNLDGGDIELSDFVFKT) form an LRR 2 repeat.

In terms of tissue distribution, exclusively expressed in the testes.

This is Coiled-coil domain-containing protein 7A from Mus musculus (Mouse).